A 182-amino-acid chain; its full sequence is Small ribosomal subunit protein uS9 (182 aa).

This sequence belongs to the universal ribosomal protein uS9 family.

This Corynebacterium glutamicum (strain R) protein is Small ribosomal subunit protein uS9.